The sequence spans 456 residues: Tyrosine phenol-lyase (456 aa).

Lys257 carries the post-translational modification N6-(pyridoxal phosphate)lysine.

The protein belongs to the beta-eliminating lyase family. As to quaternary structure, homotetramer. The cofactor is pyridoxal 5'-phosphate.

It carries out the reaction L-tyrosine + H2O = phenol + pyruvate + NH4(+). The polypeptide is Tyrosine phenol-lyase (tpl) (Citrobacter intermedius (Escherichia intermedia)).